A 166-amino-acid chain; its full sequence is Lipoprotein signal peptidase (166 aa).

A run of 4 helical transmembrane segments spans residues 9 to 29, 45 to 65, 71 to 91, and 100 to 120; these read ASGA…FDQL, ALTS…FGFL, WQRW…CFLL, and FSVS…DRLV. Active-site residues include D126 and D144. The helical transmembrane segment at 135-155 threads the bilayer; that stretch reads WHFPAFNLADSAITVGAVLLI.

It belongs to the peptidase A8 family.

The protein resides in the cell inner membrane. The enzyme catalyses Release of signal peptides from bacterial membrane prolipoproteins. Hydrolyzes -Xaa-Yaa-Zaa-|-(S,diacylglyceryl)Cys-, in which Xaa is hydrophobic (preferably Leu), and Yaa (Ala or Ser) and Zaa (Gly or Ala) have small, neutral side chains.. It participates in protein modification; lipoprotein biosynthesis (signal peptide cleavage). This protein specifically catalyzes the removal of signal peptides from prolipoproteins. The polypeptide is Lipoprotein signal peptidase (Burkholderia cenocepacia (strain HI2424)).